The following is a 274-amino-acid chain: Putative phosphoenolpyruvate synthase regulatory protein (274 aa).

154–161 lines the ADP pocket; that stretch reads AVSRSGKT.

This sequence belongs to the pyruvate, phosphate/water dikinase regulatory protein family. PSRP subfamily.

The enzyme catalyses [pyruvate, water dikinase] + ADP = [pyruvate, water dikinase]-phosphate + AMP + H(+). It carries out the reaction [pyruvate, water dikinase]-phosphate + phosphate + H(+) = [pyruvate, water dikinase] + diphosphate. In terms of biological role, bifunctional serine/threonine kinase and phosphorylase involved in the regulation of the phosphoenolpyruvate synthase (PEPS) by catalyzing its phosphorylation/dephosphorylation. This Alkalilimnicola ehrlichii (strain ATCC BAA-1101 / DSM 17681 / MLHE-1) protein is Putative phosphoenolpyruvate synthase regulatory protein.